Consider the following 263-residue polypeptide: Heat-labile enterotoxin IIB, A chain (263 aa).

Residues 1-20 (MAKVISFFISLFLISFPLYA) form the signal peptide. 26–39 (ADSRTPDEVRRSGG) lines the NAD(+) pocket. Glu-130 is an active-site residue. Cysteines 205 and 217 form a disulfide.

It belongs to the enterotoxin A family. Heterohexamer of one A chain and of five B chains.

Functionally, the biological activity of the toxin is produced by the A chain, which activates intracellular adenyl cyclase. In Escherichia coli, this protein is Heat-labile enterotoxin IIB, A chain.